The following is a 191-amino-acid chain: Small ribosomal subunit protein uS5 (191 aa).

The 64-residue stretch at 20 to 83 (FADRLVAINR…EQAKRQMIRV (64 aa)) folds into the S5 DRBM domain. Residues 158–191 (TSPRMVAQRRGKKVSDILKKDGEPAEAAAEPAEA) are disordered. Basic and acidic residues predominate over residues 170–180 (KVSDILKKDGE). The span at 182–191 (AEAAAEPAEA) shows a compositional bias: low complexity.

It belongs to the universal ribosomal protein uS5 family. Part of the 30S ribosomal subunit. Contacts proteins S4 and S8.

Functionally, with S4 and S12 plays an important role in translational accuracy. Its function is as follows. Located at the back of the 30S subunit body where it stabilizes the conformation of the head with respect to the body. This Dinoroseobacter shibae (strain DSM 16493 / NCIMB 14021 / DFL 12) protein is Small ribosomal subunit protein uS5.